A 901-amino-acid polypeptide reads, in one-letter code: HTH-type transcriptional regulator MalT (901 aa).

An ATP-binding site is contributed by 39 to 46 (SPAGYGKT). Positions 829–894 (ELIRTSPLTQ…AAVQHAQKLL (66 aa)) constitute an HTH luxR-type domain. The segment at residues 853-872 (NEQIAGELEVAATTIKTHIR) is a DNA-binding region (H-T-H motif).

Belongs to the MalT family. In terms of assembly, monomer in solution. Oligomerizes to an active state in the presence of the positive effectors ATP and maltotriose.

With respect to regulation, activated by ATP and maltotriose, which are both required for DNA binding. Positively regulates the transcription of the maltose regulon whose gene products are responsible for uptake and catabolism of malto-oligosaccharides. Specifically binds to the promoter region of its target genes, recognizing a short DNA motif called the MalT box. This is HTH-type transcriptional regulator MalT from Escherichia coli O139:H28 (strain E24377A / ETEC).